The sequence spans 295 residues: MIKYYNRKNKDYDIEKVAGEKYLNWTYSSPIGMNLLEVFIKKKIFSKIYGFYCDRRLSQKKINKFINDFQIDMSLSENQLSNFKCFNDFFTRKLKKEARPIKTDKNLLISPGDGKLLAYENLNLNSVTEVKGINYSFYELINNDSLAKEYNNGTCLVLRLCPTDYHRFHFIDNGICENTIKLNGFYYSVNPIALSKIPSVFCKNKREYSIFHSENFGDIIFMEVGATCVGSIIQTYKPNTKVLKGDEKGYFKFGGSTVILFFKKNTIKIDDDILSQSKLGYETSVIMGEPIGNKK.

Residues D113, H169, and S256 each act as charge relay system; for autoendoproteolytic cleavage activity in the active site. S256 functions as the Schiff-base intermediate with substrate; via pyruvic acid; for decarboxylase activity in the catalytic mechanism. Residue S256 is modified to Pyruvic acid (Ser); by autocatalysis.

The protein belongs to the phosphatidylserine decarboxylase family. PSD-B subfamily. Prokaryotic type II sub-subfamily. In terms of assembly, heterodimer of a large membrane-associated beta subunit and a small pyruvoyl-containing alpha subunit. Requires pyruvate as cofactor. Is synthesized initially as an inactive proenzyme. Formation of the active enzyme involves a self-maturation process in which the active site pyruvoyl group is generated from an internal serine residue via an autocatalytic post-translational modification. Two non-identical subunits are generated from the proenzyme in this reaction, and the pyruvate is formed at the N-terminus of the alpha chain, which is derived from the carboxyl end of the proenzyme. The autoendoproteolytic cleavage occurs by a canonical serine protease mechanism, in which the side chain hydroxyl group of the serine supplies its oxygen atom to form the C-terminus of the beta chain, while the remainder of the serine residue undergoes an oxidative deamination to produce ammonia and the pyruvoyl prosthetic group on the alpha chain. During this reaction, the Ser that is part of the protease active site of the proenzyme becomes the pyruvoyl prosthetic group, which constitutes an essential element of the active site of the mature decarboxylase.

It localises to the cell membrane. The enzyme catalyses a 1,2-diacyl-sn-glycero-3-phospho-L-serine + H(+) = a 1,2-diacyl-sn-glycero-3-phosphoethanolamine + CO2. It participates in phospholipid metabolism; phosphatidylethanolamine biosynthesis; phosphatidylethanolamine from CDP-diacylglycerol: step 2/2. Its function is as follows. Catalyzes the formation of phosphatidylethanolamine (PtdEtn) from phosphatidylserine (PtdSer). This Clostridium botulinum (strain Langeland / NCTC 10281 / Type F) protein is Phosphatidylserine decarboxylase proenzyme.